The primary structure comprises 233 residues: Large ribosomal subunit protein uL1 (233 aa).

The protein belongs to the universal ribosomal protein uL1 family. In terms of assembly, part of the 50S ribosomal subunit.

Its function is as follows. Binds directly to 23S rRNA. The L1 stalk is quite mobile in the ribosome, and is involved in E site tRNA release. Protein L1 is also a translational repressor protein, it controls the translation of the L11 operon by binding to its mRNA. This is Large ribosomal subunit protein uL1 from Laribacter hongkongensis (strain HLHK9).